We begin with the raw amino-acid sequence, 35 residues long: uncharacterized protein (35 aa).

Residues 1-27 show a composition bias toward low complexity; sequence MDQNEANIYNENNENNENNENENCQNE. Positions 1 to 35 are disordered; sequence MDQNEANIYNENNENNENNENENCQNEPIRIKIII.

This is an uncharacterized protein from Dictyostelium discoideum (Social amoeba).